The following is a 156-amino-acid chain: Snaclec 2 (156 aa).

A signal peptide spans 1 to 21 (MGRFIFLSSGLLVVFLSLSGA). Disulfide bonds link Cys-25-Cys-36, Cys-53-Cys-150, and Cys-125-Cys-142. The 120-residue stretch at 32–151 (FDQHCYRAFD…CGDDYPFVCK (120 aa)) folds into the C-type lectin domain.

This sequence belongs to the snaclec family. In terms of assembly, heterodimer; disulfide-linked. In terms of tissue distribution, expressed by the venom gland.

It localises to the secreted. Interferes with one step of hemostasis (modulation of platelet aggregation, or coagulation cascade, for example). The protein is Snaclec 2 of Bitis gabonica (Gaboon adder).